Reading from the N-terminus, the 394-residue chain is 1-deoxy-D-xylulose 5-phosphate reductoisomerase (394 aa).

Residues T12, G13, S14, I15, G38, and N126 each contribute to the NADPH site. K127 contacts 1-deoxy-D-xylulose 5-phosphate. E128 lines the NADPH pocket. Mn(2+) is bound at residue D151. Positions 152, 153, 177, and 200 each coordinate 1-deoxy-D-xylulose 5-phosphate. E153 is a Mn(2+) binding site. G206 serves as a coordination point for NADPH. Residues S213, N218, K219, and E222 each contribute to the 1-deoxy-D-xylulose 5-phosphate site. Position 222 (E222) interacts with Mn(2+).

This sequence belongs to the DXR family. It depends on Mg(2+) as a cofactor. Mn(2+) serves as cofactor.

It carries out the reaction 2-C-methyl-D-erythritol 4-phosphate + NADP(+) = 1-deoxy-D-xylulose 5-phosphate + NADPH + H(+). It participates in isoprenoid biosynthesis; isopentenyl diphosphate biosynthesis via DXP pathway; isopentenyl diphosphate from 1-deoxy-D-xylulose 5-phosphate: step 1/6. Catalyzes the NADPH-dependent rearrangement and reduction of 1-deoxy-D-xylulose-5-phosphate (DXP) to 2-C-methyl-D-erythritol 4-phosphate (MEP). This Beutenbergia cavernae (strain ATCC BAA-8 / DSM 12333 / CCUG 43141 / JCM 11478 / NBRC 16432 / NCIMB 13614 / HKI 0122) protein is 1-deoxy-D-xylulose 5-phosphate reductoisomerase.